The primary structure comprises 475 residues: Beta-amyrin 16-alpha-hydroxylase CYP87D16 (475 aa).

The helical transmembrane segment at 3-23 (VVGLIGVAVVTILITQYVYKW) threads the bilayer. C423 contributes to the heme binding site.

It belongs to the cytochrome P450 family. It depends on heme as a cofactor.

It localises to the membrane. The catalysed reaction is beta-amyrin + reduced [NADPH--hemoprotein reductase] + O2 = 16alpha-hydroxy-beta-amyrin + oxidized [NADPH--hemoprotein reductase] + H2O + H(+). In terms of biological role, involved in the biosynthetic pathway of maesasaponins, which are oleanane-type saponins with diverse biological activities. Catalyzes the C-16alpha oxidation of beta-amyrin to form 16alpha-hydroxy-beta-amyrin. This chain is Beta-amyrin 16-alpha-hydroxylase CYP87D16, found in Maesa lanceolata (False assegai).